The chain runs to 370 residues: Glutamate 5-kinase (370 aa).

Lysine 12 contributes to the ATP binding site. Serine 52, aspartate 139, and asparagine 151 together coordinate substrate. ATP is bound by residues 171–172 (SD) and 213–219 (TGGMFTK). Residues 278-356 (QAHIAVDAGA…SDIESILGYS (79 aa)) form the PUA domain.

This sequence belongs to the glutamate 5-kinase family.

It is found in the cytoplasm. It carries out the reaction L-glutamate + ATP = L-glutamyl 5-phosphate + ADP. The protein operates within amino-acid biosynthesis; L-proline biosynthesis; L-glutamate 5-semialdehyde from L-glutamate: step 1/2. Functionally, catalyzes the transfer of a phosphate group to glutamate to form L-glutamate 5-phosphate. In Herpetosiphon aurantiacus (strain ATCC 23779 / DSM 785 / 114-95), this protein is Glutamate 5-kinase.